The sequence spans 953 residues: TPR repeat-containing protein ZIP4 (953 aa).

A TPR 1 repeat occupies 129 to 162 (ASFFHRSGLAWLDLGRVDLASACFEKATPLVSAA). Positions 248 to 269 (AASPSSSSPRTPPYGGATPKTP) are disordered. TPR repeat units lie at residues 432–465 (HALL…VSRD) and 473–506 (ADCF…EPNI). The segment at 924–953 (RVSGDEPDECSQEEAPKASISGSMSQPVLV) is disordered. A compositionally biased stretch (polar residues) spans 943 to 953 (ISGSMSQPVLV).

It is found in the nucleus. Its subcellular location is the chromosome. Functionally, required for crossover formation, complete synapsis of homologous chromosomes and bivalent formation during meiosis. Is specific to recombination events resulting in interference-sensitive crossovers (class I meiotic crossover) and works cooperatively with MER3 to promote crossovers. This chain is TPR repeat-containing protein ZIP4, found in Oryza sativa subsp. indica (Rice).